A 232-amino-acid polypeptide reads, in one-letter code: Large ribosomal subunit protein uL1 (232 aa).

The protein belongs to the universal ribosomal protein uL1 family. As to quaternary structure, part of the 50S ribosomal subunit.

In terms of biological role, binds directly to 23S rRNA. The L1 stalk is quite mobile in the ribosome, and is involved in E site tRNA release. Functionally, protein L1 is also a translational repressor protein, it controls the translation of the L11 operon by binding to its mRNA. The polypeptide is Large ribosomal subunit protein uL1 (Rhizobium rhizogenes (strain K84 / ATCC BAA-868) (Agrobacterium radiobacter)).